We begin with the raw amino-acid sequence, 167 residues long: Osteocalcin 2a (167 aa).

A signal peptide spans 1-18; the sequence is MKSLTLLTICAVLSVSLS. Residues 19–118 constitute a propeptide that is removed on maturation; it reads MNDLALDVVL…LASVLLRRKR (100 aa). Positions 28 to 99 are disordered; it reads LDPAPDPATE…TTEDPAAATE (72 aa). Positions 38 to 87 are enriched in low complexity; it reads PAPAADSSASSSASSSSSSASDSSASASDSSDSDSSSASSSSSSSESASA. A Gla domain is found at 131–163; the sequence is QVESLSEVCELNLACEHMAETAGIVAAYTAYYG. 3 residues coordinate Ca(2+): Glu-133, Glu-137, and Glu-140. Glu-133, Glu-137, and Glu-140 each carry 4-carboxyglutamate. Cys-139 and Cys-145 are oxidised to a cystine.

The protein belongs to the osteocalcin/matrix Gla protein family. Gamma-carboxyglutamate residues are formed by vitamin K dependent carboxylation. These residues are essential for the binding of calcium.

The protein localises to the secreted. Its function is as follows. Binds strongly to apatite and calcium. This Oncorhynchus mykiss (Rainbow trout) protein is Osteocalcin 2a.